The sequence spans 335 residues: MIRWFKCFMRMIFEQVGLNMESVLWSSKPYGSSRSIVRKIGTNLSLIQCPRVQFQLTSQAAEGNHPHQFREDAVASFADVGWVAQEEGEVSTRLRSEVWSKTAQPLPGELHQPGHSLGRQDSVPNLLHEEPAPRSTVIANEEAMQKISALENELATLRAQIAKIVILQEQQNLTAAGLSPVASAAVPCVPPPPPPPPPPPLPPPALQQSMSAIELIRERKNRKTNSGPIPTENGPKKPEIPNMLEILKDMNSVKLRSVKKSSGDTKPKVADPTDPAALIAEALKKKFAYRYRRDSQSESDKVIPKSETNTKTEVVLFGPHMLKSTGKMKTLIEKS.

A mitochondrion-targeting transit peptide spans 1 to 48 (MIRWFKCFMRMIFEQVGLNMESVLWSSKPYGSSRSIVRKIGTNLSLIQ). A coiled-coil region spans residues 134–170 (RSTVIANEEAMQKISALENELATLRAQIAKIVILQEQ). The necessary and sufficient to promote mitochondrial fission stretch occupies residues 182-309 (ASAAVPCVPP…DKVIPKSETN (128 aa)). The disordered stretch occupies residues 219 to 240 (RKNRKTNSGPIPTENGPKKPEI).

It belongs to the MTFR1 family. Widely expressed in embryonic tissues with higher expression in cartilage and hypertrophic chondrocytes. Specifically expressed in hypertrophic chondrocytes (at protein level).

It is found in the mitochondrion. May play a role in mitochondrial aerobic respiration. May also regulate mitochondrial organization and fission. The chain is Mitochondrial fission regulator 1 (MTFR1) from Gallus gallus (Chicken).